A 331-amino-acid polypeptide reads, in one-letter code: Protein Brevis radix-like 1 (331 aa).

The interval 1–111 (MFTCINCTKM…HQSGRPDSRF (111 aa)) is disordered. 2 stretches are compositionally biased toward polar residues: residues 25 to 41 (STTPNTKEAVKSLTTQI) and 48 to 66 (FSGSHKQSKPTPGSSSSNL). The region spanning 137 to 192 (KEWMAQVEPGVHITFVSLPSGGNDLKRIRFSREVFDKWQAQRWWGENYDRIVELYN) is the BRX 1 domain. Disordered stretches follow at residues 201 to 246 (LQTP…VPHH) and 258 to 279 (TTSSRDEPPSMSNASEMQGEWV). Basic and acidic residues predominate over residues 221–235 (DSARESRDWTQRDNN). The BRX 2 domain maps to 276–331 (GEWVEEDEPGVYITIRQLPDGTRELRRVRFSRERFGEVHAKTWWEQNRDRIQTQYL).

Belongs to the BRX family. As to quaternary structure, heterodimer with BRXL1. Expressed in roots.

The protein resides in the nucleus. Functionally, may act as a regulator of cell proliferation and elongation in the root. The sequence is that of Protein Brevis radix-like 1 (BRXL1) from Arabidopsis thaliana (Mouse-ear cress).